A 1269-amino-acid polypeptide reads, in one-letter code: DNA-directed RNA polymerase subunit beta'' (1269 aa).

Positions 226, 301, 308, and 311 each coordinate Zn(2+).

This sequence belongs to the RNA polymerase beta' chain family. RpoC2 subfamily. In terms of assembly, in plastids the minimal PEP RNA polymerase catalytic core is composed of four subunits: alpha, beta, beta', and beta''. When a (nuclear-encoded) sigma factor is associated with the core the holoenzyme is formed, which can initiate transcription. Requires Zn(2+) as cofactor.

It is found in the plastid. The protein resides in the chloroplast. The enzyme catalyses RNA(n) + a ribonucleoside 5'-triphosphate = RNA(n+1) + diphosphate. Functionally, DNA-dependent RNA polymerase catalyzes the transcription of DNA into RNA using the four ribonucleoside triphosphates as substrates. This Cyanidium caldarium (Red alga) protein is DNA-directed RNA polymerase subunit beta''.